The sequence spans 458 residues: Argininosuccinate lyase (458 aa).

It belongs to the lyase 1 family. Argininosuccinate lyase subfamily.

The protein resides in the cytoplasm. The catalysed reaction is 2-(N(omega)-L-arginino)succinate = fumarate + L-arginine. Its pathway is amino-acid biosynthesis; L-arginine biosynthesis; L-arginine from L-ornithine and carbamoyl phosphate: step 3/3. The protein is Argininosuccinate lyase of Salmonella dublin (strain CT_02021853).